We begin with the raw amino-acid sequence, 579 residues long: Glutamine--tRNA ligase (579 aa).

The short motif at 41-51 is the 'HIGH' region element; that stretch reads PEPNGYLHIGH. ATP contacts are provided by residues 42–44 and 48–54; these read EPN and HIGHAKA. The L-glutamine site is built by Asp74 and Tyr218. Residues Thr237, 285 to 286, and 293 to 295 contribute to the ATP site; these read RL and MSK. Positions 292–296 match the 'KMSKS' region motif; the sequence is VMSKR.

This sequence belongs to the class-I aminoacyl-tRNA synthetase family. In terms of assembly, monomer.

The protein localises to the cytoplasm. It catalyses the reaction tRNA(Gln) + L-glutamine + ATP = L-glutaminyl-tRNA(Gln) + AMP + diphosphate. This is Glutamine--tRNA ligase from Xanthomonas euvesicatoria pv. vesicatoria (strain 85-10) (Xanthomonas campestris pv. vesicatoria).